The chain runs to 98 residues: MSLTYMNMFMAFTISLLGLLLYRSHMMSSLLCLEGMMLSLFVMMTMVILNTHLTLASMIPIILLVFAACEAALGLSLLVMVSTTYGMDYVQNLNLLQC.

A run of 3 helical transmembrane segments spans residues 1–21 (MSLT…GLLL), 29–49 (SLLC…MVIL), and 61–81 (IILL…LVMV).

It belongs to the complex I subunit 4L family. As to quaternary structure, core subunit of respiratory chain NADH dehydrogenase (Complex I) which is composed of 45 different subunits.

The protein resides in the mitochondrion inner membrane. The enzyme catalyses a ubiquinone + NADH + 5 H(+)(in) = a ubiquinol + NAD(+) + 4 H(+)(out). In terms of biological role, core subunit of the mitochondrial membrane respiratory chain NADH dehydrogenase (Complex I) which catalyzes electron transfer from NADH through the respiratory chain, using ubiquinone as an electron acceptor. Part of the enzyme membrane arm which is embedded in the lipid bilayer and involved in proton translocation. The sequence is that of NADH-ubiquinone oxidoreductase chain 4L (MT-ND4L) from Platyrrhinus helleri (Heller's broad-nosed bat).